A 212-amino-acid polypeptide reads, in one-letter code: Methylthioribulose-1-phosphate dehydratase (212 aa).

Zn(2+) contacts are provided by His98 and His100.

This sequence belongs to the aldolase class II family. MtnB subfamily. Zn(2+) is required as a cofactor.

The catalysed reaction is 5-(methylsulfanyl)-D-ribulose 1-phosphate = 5-methylsulfanyl-2,3-dioxopentyl phosphate + H2O. It functions in the pathway amino-acid biosynthesis; L-methionine biosynthesis via salvage pathway; L-methionine from S-methyl-5-thio-alpha-D-ribose 1-phosphate: step 2/6. Its function is as follows. Catalyzes the dehydration of methylthioribulose-1-phosphate (MTRu-1-P) into 2,3-diketo-5-methylthiopentyl-1-phosphate (DK-MTP-1-P). In Picosynechococcus sp. (strain ATCC 27264 / PCC 7002 / PR-6) (Agmenellum quadruplicatum), this protein is Methylthioribulose-1-phosphate dehydratase.